Reading from the N-terminus, the 103-residue chain is MKSLLLLSVLAALAVAALCYESHESLESYEINPFLNRRNANTFISPQQRWRAKAQERIRELNKPPYELNREACDDYKLCERYAMVYGYNAAYNRYFRQRPGAK.

A signal peptide spans 1-19 (MKSLLLLSVLAALAVAALC). The residue at position 21 (Glu-21) is a 4-carboxyglutamate. Ser-22, Ser-25, and Ser-28 each carry phosphoserine. The region spanning 51-97 (RAKAQERIRELNKPPYELNREACDDYKLCERYAMVYGYNAAYNRYFR) is the Gla domain. Residues Glu-56, Glu-60, Glu-67, and Glu-71 each carry the 4-carboxyglutamate modification. An intrachain disulfide couples Cys-73 to Cys-79.

Belongs to the osteocalcin/matrix Gla protein family. In terms of processing, requires vitamin K-dependent gamma-carboxylation for its function.

The protein localises to the secreted. Functionally, associates with the organic matrix of bone and cartilage. Thought to act as an inhibitor of bone formation. The chain is Matrix Gla protein (MGP) from Sus scrofa (Pig).